A 60-amino-acid chain; its full sequence is Metallothionein B (60 aa).

Residues 1–28 (MDPCECSKTGSCNCGGSCKCSNCACTSC) form a beta region. 20 residues coordinate a divalent metal cation: Cys4, Cys6, Cys12, Cys14, Cys18, Cys20, Cys23, Cys25, Cys28, Cys32, Cys33, Cys35, Cys36, Cys40, Cys43, Cys47, Cys49, Cys54, Cys58, and Cys59. The interval 29–60 (KKSCCPCCPSDCSKCASGCVCKGKTCDTSCCQ) is alpha.

The protein belongs to the metallothionein superfamily. Type 1 family.

In terms of biological role, metallothioneins have a high content of cysteine residues that bind various heavy metals. The sequence is that of Metallothionein B (mtb) from Oncorhynchus mykiss (Rainbow trout).